The sequence spans 390 residues: S-adenosylmethionine synthase 1 (390 aa).

A Mg(2+)-binding site is contributed by Glu-9. His-15 is a binding site for ATP. Residue Glu-43 coordinates K(+). Positions 56 and 99 each coordinate L-methionine. ATP is bound by residues 167–169 (DGK), 235–238 (SGRF), Asp-246, 252–253 (RK), Ala-269, Lys-273, and Lys-277. Residue Asp-246 coordinates L-methionine. L-methionine is bound at residue Lys-277.

Belongs to the AdoMet synthase family. In terms of assembly, homotetramer. Requires Mn(2+) as cofactor. Mg(2+) serves as cofactor. The cofactor is Co(2+). It depends on K(+) as a cofactor.

The protein localises to the cytoplasm. It catalyses the reaction L-methionine + ATP + H2O = S-adenosyl-L-methionine + phosphate + diphosphate. It functions in the pathway amino-acid biosynthesis; S-adenosyl-L-methionine biosynthesis; S-adenosyl-L-methionine from L-methionine: step 1/1. In terms of biological role, catalyzes the formation of S-adenosylmethionine from methionine and ATP. The reaction comprises two steps that are both catalyzed by the same enzyme: formation of S-adenosylmethionine (AdoMet) and triphosphate, and subsequent hydrolysis of the triphosphate. In Actinidia chinensis var. chinensis (Chinese soft-hair kiwi), this protein is S-adenosylmethionine synthase 1 (SAM1).